The following is a 1180-amino-acid chain: DNA-directed RNA polymerase subunit beta (1180 aa).

Residues 1154–1164 (EMKELDDEDEQ) show a composition bias toward acidic residues. The interval 1154 to 1180 (EMKELDDEDEQASDKLNLNIDSTESNV) is disordered. The segment covering 1167–1180 (DKLNLNIDSTESNV) has biased composition (polar residues).

The protein belongs to the RNA polymerase beta chain family. The RNAP catalytic core consists of 2 alpha, 1 beta, 1 beta' and 1 omega subunit. When a sigma factor is associated with the core the holoenzyme is formed, which can initiate transcription.

The enzyme catalyses RNA(n) + a ribonucleoside 5'-triphosphate = RNA(n+1) + diphosphate. Its function is as follows. DNA-dependent RNA polymerase catalyzes the transcription of DNA into RNA using the four ribonucleoside triphosphates as substrates. The polypeptide is DNA-directed RNA polymerase subunit beta (Halalkalibacterium halodurans (strain ATCC BAA-125 / DSM 18197 / FERM 7344 / JCM 9153 / C-125) (Bacillus halodurans)).